The sequence spans 264 residues: Hydroxyethylthiazole kinase (264 aa).

A substrate-binding site is contributed by Met47. Residues Arg123 and Ser169 each coordinate ATP. Substrate is bound at residue Gly196.

Belongs to the Thz kinase family. Mg(2+) serves as cofactor.

It carries out the reaction 5-(2-hydroxyethyl)-4-methylthiazole + ATP = 4-methyl-5-(2-phosphooxyethyl)-thiazole + ADP + H(+). It functions in the pathway cofactor biosynthesis; thiamine diphosphate biosynthesis; 4-methyl-5-(2-phosphoethyl)-thiazole from 5-(2-hydroxyethyl)-4-methylthiazole: step 1/1. Catalyzes the phosphorylation of the hydroxyl group of 4-methyl-5-beta-hydroxyethylthiazole (THZ). The protein is Hydroxyethylthiazole kinase of Brachyspira hyodysenteriae (strain ATCC 49526 / WA1).